Consider the following 372-residue polypeptide: MAQRALWRPQATPGPPGAAAPPGHRGAPPDARAPDPGPEADLVARIANSVFVWRVVRGDERLKIFRCLTVLTEPLCQVALPDPDPERALFCEIFLYLTRPKALRLPSNTFFAIFFFNRERRYCATVHLRSVTHPRTPLLCTLAFGHLEAASPPEETPDPAAEQLADEPVAHELDGAYLVPTDTAPESGACCALGPGAWWHLPGGRIYCWAMDDDLGSLCPPGSRARHLGWLLSRITDPPGGGGACAPTAHIDSANALWRAPAVAEACPCVAPCMWSNMAQRTLAVRGDASLCQLLFGHPVDAVILRQATRRPRITAHLHEVVVGRDGAESVIRPTSAGWRLCVLSSYTSRLFATSCPAVARAVARASSSDYK.

Residues 1 to 38 (MAQRALWRPQATPGPPGAAAPPGHRGAPPDARAPDPGP) are disordered. Over residues 20–30 (APPGHRGAPPD) the composition is skewed to low complexity.

It belongs to the herpesviridae cytoplasmic envelopment protein 2 family. Interacts with cytoplasmic envelopment protein 3 and with the capsid.

It is found in the virion tegument. The protein localises to the host cytoplasm. Its subcellular location is the host nucleus. In terms of biological role, plays a critical role in cytoplasmic virus egress. Participates in the final step of tegumentation and envelope acquisition within the host cytoplasm by directly interacting with the capsid. Upon virion binding to target cell, a signaling cascade is triggered to disrupt the interaction with the capsid, thereby preparing capsid uncoating. The sequence is that of Cytoplasmic envelopment protein 2 (UL16) from Human herpesvirus 2 (strain HG52) (HHV-2).